We begin with the raw amino-acid sequence, 294 residues long: Flagellin B1 (294 aa).

The propeptide occupies 1 to 8 (MKTRTRKG).

It belongs to the archaeal flagellin family.

It localises to the archaeal flagellum. Functionally, flagellin is the subunit protein which polymerizes to form the filaments of archaeal flagella. This chain is Flagellin B1 (flaB1), found in Thermococcus kodakarensis (strain ATCC BAA-918 / JCM 12380 / KOD1) (Pyrococcus kodakaraensis (strain KOD1)).